A 121-amino-acid chain; its full sequence is Large ribosomal subunit protein uL14 (121 aa).

The protein belongs to the universal ribosomal protein uL14 family. Part of the 50S ribosomal subunit. Forms a cluster with proteins L3 and L19. In the 70S ribosome, L14 and L19 interact and together make contacts with the 16S rRNA in bridges B5 and B8.

In terms of biological role, binds to 23S rRNA. Forms part of two intersubunit bridges in the 70S ribosome. The polypeptide is Large ribosomal subunit protein uL14 (Azobacteroides pseudotrichonymphae genomovar. CFP2).